A 100-amino-acid polypeptide reads, in one-letter code: Urease subunit gamma (100 aa).

Belongs to the urease gamma subunit family. Heterotrimer of UreA (gamma), UreB (beta) and UreC (alpha) subunits. Three heterotrimers associate to form the active enzyme.

It is found in the cytoplasm. The catalysed reaction is urea + 2 H2O + H(+) = hydrogencarbonate + 2 NH4(+). Its pathway is nitrogen metabolism; urea degradation; CO(2) and NH(3) from urea (urease route): step 1/1. The polypeptide is Urease subunit gamma (Chelativorans sp. (strain BNC1)).